Consider the following 822-residue polypeptide: BDNF/NT-3 growth factors receptor (822 aa).

A signal peptide spans 1-31 (MSSWIRWHGPAMARLWGFCWLVVGFWRAAFA). 2 cysteine pairs are disulfide-bonded: cysteine 32/cysteine 38 and cysteine 36/cysteine 45. One can recognise an LRRNT domain in the interval 32 to 61 (CPTSCKCSASRIWCSDPSPGIVAFPRLEPN). Topologically, residues 32–430 (CPTSCKCSAS…DVTDKTGREH (399 aa)) are extracellular. N-linked (GlcNAc...) asparagine glycans are attached at residues asparagine 67, asparagine 95, and asparagine 121. LRR repeat units follow at residues 92–113 (GLRNLTIVDSGLKFVAHKAFLK) and 116–137 (NLQHINFTRNKLTSLSRKHFRH). Residues 148–196 (NPFTCSCDIMWIKTLQEAKSSPDTQDLYCLNESSKNIPLANLQIPNCGL) form the LRRCT domain. Intrachain disulfides connect cysteine 152–cysteine 176 and cysteine 154–cysteine 194. 8 N-linked (GlcNAc...) asparagine glycosylation sites follow: asparagine 178, asparagine 205, asparagine 241, asparagine 254, asparagine 280, asparagine 325, asparagine 338, and asparagine 412. Ig-like C2-type domains are found at residues 197-282 (PSAN…VNLT) and 295-365 (PTSD…IAKN). The cysteines at positions 218 and 266 are disulfide-linked. An intrachain disulfide couples cysteine 302 to cysteine 345. The helical transmembrane segment at 431–454 (LSVYAVVVIASVVGFCLLVMLFLL) threads the bilayer. Residues 455–466 (KLARHSKFGMKG) are interaction with MAPK8IP3/JIP3. Topologically, residues 455–822 (KLARHSKFGM…ASPVYLDILG (368 aa)) are cytoplasmic. A disordered region spans residues 475 to 498 (DDSASPLHHISNGSNTPSSSEGGP). Residues 485–495 (SNGSNTPSSSE) show a composition bias toward polar residues. Tyrosine 516 carries the post-translational modification Phosphotyrosine; by autocatalysis. The Protein kinase domain maps to 538-807 (IVLKRELGEG…KNIKGIHTLL (270 aa)). ATP-binding positions include 544–552 (LGEGAFGKV) and lysine 572. Aspartate 676 (proton acceptor) is an active-site residue. 4 positions are modified to phosphotyrosine; by autocatalysis: tyrosine 702, tyrosine 706, tyrosine 707, and tyrosine 817.

This sequence belongs to the protein kinase superfamily. Tyr protein kinase family. Insulin receptor subfamily. As to quaternary structure, exists in a dynamic equilibrium between monomeric (low affinity) and dimeric (high affinity) structures. Interacts (phosphorylated upon activation by BDNF) with SHC1; mediates SHC1 phosphorylation and activation. Interacts (phosphorylated upon activation by BDNF) with PLCG1 and/or PLCG2; mediates PLCG1 phosphorylation and activation. Interacts with SH2B1 and SH2B2. Interacts with NGFR; may regulate the ligand specificity of the receptor. Interacts with SORCS2; this interaction is important for normal targeting to post-synaptic densities in response to high-frequency stimulation. Interacts (phosphorylated upon ligand-binding) with SH2D1A; regulates NTRK2. Interacts with SQSTM1 and KIDINS220. Interacts (phosphorylated upon ligand-binding) with FRS2; activates the MAPK signaling pathway. Interacts with APPL1. Interacts with MAPK8IP3/JIP3 and KLC1; interaction with KLC1 is mediated by MAPK8IP3/JIP3. Interacts with SORL1; this interaction facilitates NTRK2 trafficking between synaptic plasma membranes, postsynaptic densities and cell soma, hence positively regulates BDNF signaling. Interacts with SLITRK2. Phosphorylated. Undergoes ligand-mediated autophosphorylation that is required for interaction with SHC1 and PLCG1 and other downstream effectors. Isoform TrkB-T-Shc is not phosphorylated. Post-translationally, ubiquitinated. Undergoes polyubiquitination upon activation; regulated by NGFR. Ubiquitination regulates the internalization of the receptor. As to expression, isoform TrkB is expressed in the central and peripheral nervous system. In the central nervous system (CNS), expression is observed in the cerebral cortex, hippocampus, thalamus, choroid plexus, granular layer of the cerebellum, brain stem, and spinal cord. In the peripheral nervous system, it is expressed in many cranial ganglia, the ophthalmic nerve, the vestibular system, multiple facial structures, the submaxillary glands, and dorsal root ganglia. Isoform TrkB-T1 is mainly expressed in the brain but also detected in other tissues including pancreas, kidney and heart. Isoform TrkB-T-Shc is predominantly expressed in the brain.

It is found in the cell membrane. It localises to the endosome membrane. The protein resides in the early endosome membrane. The protein localises to the cell projection. Its subcellular location is the axon. It is found in the dendrite. It localises to the cytoplasm. The protein resides in the perinuclear region. The protein localises to the postsynaptic density. The catalysed reaction is L-tyrosyl-[protein] + ATP = O-phospho-L-tyrosyl-[protein] + ADP + H(+). The neuronal activity and the influx of calcium positively regulate the kinase activity and the internalization of the receptor which are both important for active signaling. Regulated by NGFR that may control the internalization of the receptor. NGFR may also stimulate the activation by BDNF compared to NTF3 and NTF4. SH2D1A inhibits the autophosphorylation of the receptor, and alters the recruitment and activation of downstream effectors and signaling cascades. The formation of active receptors dimers able to fully transduce the ligand-mediated signal, may be negatively regulated by the formation of inactive heterodimers with the non-catalytic isoforms. Receptor tyrosine kinase involved in the development and the maturation of the central and the peripheral nervous systems through regulation of neuron survival, proliferation, migration, differentiation, and synapse formation and plasticity. Receptor for BDNF/brain-derived neurotrophic factor and NTF4/neurotrophin-4. Alternatively can also bind NTF3/neurotrophin-3 which is less efficient in activating the receptor but regulates neuron survival through NTRK2. Upon ligand-binding, undergoes homodimerization, autophosphorylation and activation. Recruits, phosphorylates and/or activates several downstream effectors including SHC1, FRS2, SH2B1, SH2B2 and PLCG1 that regulate distinct overlapping signaling cascades. Through SHC1, FRS2, SH2B1, SH2B2 activates the GRB2-Ras-MAPK cascade that regulates for instance neuronal differentiation including neurite outgrowth. Through the same effectors controls the Ras-PI3 kinase-AKT1 signaling cascade that mainly regulates growth and survival. Through PLCG1 and the downstream protein kinase C-regulated pathways controls synaptic plasticity. Thereby, plays a role in learning and memory by regulating both short term synaptic function and long-term potentiation. PLCG1 also leads to NF-Kappa-B activation and the transcription of genes involved in cell survival. Hence, it is able to suppress anoikis, the apoptosis resulting from loss of cell-matrix interactions. May also play a role in neutrophin-dependent calcium signaling in glial cells and mediate communication between neurons and glia. The polypeptide is BDNF/NT-3 growth factors receptor (NTRK2) (Homo sapiens (Human)).